Here is a 622-residue protein sequence, read N- to C-terminus: Probable ATP-citrate synthase (622 aa).

Residues 228–248 (ALRY…ELGG) and 279–305 (FPTE…KNKA) contribute to the ATP site. Glu245 lines the Mg(2+) pocket. His287 serves as the catalytic Tele-phosphohistidine intermediate. 306–316 (LREAGAVVPTS) serves as a coordination point for CoA.

The protein in the N-terminal section; belongs to the succinate/malate CoA ligase beta subunit family. It in the C-terminal section; belongs to the succinate/malate CoA ligase alpha subunit family. As to quaternary structure, homotetramer.

Its subcellular location is the cytoplasm. It carries out the reaction oxaloacetate + acetyl-CoA + ADP + phosphate = citrate + ATP + CoA. Catalyzes the cleavage of citrate into oxaloacetate and acetyl-CoA, the latter serving as common substrate in multiple biochemical reactions in protein, carbohydrate and lipid metabolism. The protein is Probable ATP-citrate synthase (acly) of Dictyostelium discoideum (Social amoeba).